Consider the following 323-residue polypeptide: Prenyl transferase (323 aa).

Positions 46, 49, and 81 each coordinate isopentenyl diphosphate. Aspartate 88 and aspartate 92 together coordinate Mg(2+). Arginine 97 contributes to the an all-trans-polyprenyl diphosphate binding site. Arginine 98 contacts isopentenyl diphosphate. An all-trans-polyprenyl diphosphate-binding residues include lysine 174, threonine 175, and glutamine 212.

It belongs to the FPP/GGPP synthase family. It depends on Mg(2+) as a cofactor.

The protein localises to the plastid. The protein resides in the chloroplast. Functionally, possible role in synthesis of the nonaprenyl side chain of plastoquinone or in synthesis of other prenyl chains such as undekaprenyl pyrophosphate. In Cyanidium caldarium (Red alga), this protein is Prenyl transferase (preA).